Reading from the N-terminus, the 435-residue chain is ATP-dependent RNA helicase RhlB (435 aa).

Positions glutamine 9–alanine 37 match the Q motif motif. Residues leucine 40–valine 219 form the Helicase ATP-binding domain. Alanine 53–threonine 60 is a binding site for ATP. Positions aspartate 165–aspartate 168 match the DEAD box motif. Positions alanine 245–isoleucine 390 constitute a Helicase C-terminal domain. Residues alanine 395–alanine 435 are disordered. Residues serine 401 to glycine 413 show a composition bias toward polar residues. A compositionally biased stretch (basic residues) spans asparagine 422 to alanine 435.

The protein belongs to the DEAD box helicase family. RhlB subfamily. In terms of assembly, component of the RNA degradosome, which is a multiprotein complex involved in RNA processing and mRNA degradation.

The protein localises to the cytoplasm. It catalyses the reaction ATP + H2O = ADP + phosphate + H(+). DEAD-box RNA helicase involved in RNA degradation. Has RNA-dependent ATPase activity and unwinds double-stranded RNA. This is ATP-dependent RNA helicase RhlB from Vibrio vulnificus (strain CMCP6).